The primary structure comprises 442 residues: D-serine dehydratase (442 aa).

Lys118 bears the N6-(pyridoxal phosphate)lysine mark.

The protein belongs to the serine/threonine dehydratase family. DsdA subfamily. In terms of assembly, monomer. Pyridoxal 5'-phosphate is required as a cofactor.

The enzyme catalyses D-serine = pyruvate + NH4(+). This chain is D-serine dehydratase, found in Shigella flexneri.